We begin with the raw amino-acid sequence, 250 residues long: Probable 2' cyclic ADP-D-ribose synthase TcpB (250 aa).

The interval 1 to 46 (MSKEKQAQSKAHKAQQAISSAKSLSTQKSKMSELERATRDGAAIGK) is disordered. Positions 1–117 (MSKEKQAQSK…TASATMEAEE (117 aa)) are necessary and sufficient for phosphoinositide binding. A compositionally biased stretch (low complexity) spans 14–23 (AQQAISSAKS). Residues 30 to 39 (KMSELERATR) show a composition bias toward basic and acidic residues. The TIR domain maps to 117–250 (EEYDFFISHA…EIAKELHSLI (134 aa)). Glu-192 is a catalytic residue.

Homodimer; may also form oligomers. Interacts with host TIRAP. Interacts with host MYD88. Interaction with host MYD88 was not confirmed by another study. Interacts with host TLR4. Abolishes the interaction of host TIRAP with TLR4.

The protein resides in the secreted. It localises to the host cell membrane. The enzyme catalyses NAD(+) + H2O = ADP-D-ribose + nicotinamide + H(+). It catalyses the reaction NAD(+) = 2'cADPR + nicotinamide + H(+). Virulence factor that interferes with host Toll-like receptor 2 (TLR2) and TLR4 signaling, resulting in the reduction of dendritic cell maturation, inhibition of pro-inflammatory cytokine secretion and impaired NF-kappa-B activation in macrophages. Interferes with host TLR4 signaling by abolishing host TLR4-TIRAP interaction (but not host TIRAP-MYD88 interaction) and its downstream signaling. Inhibits host TLR 2 induced NF-kappa-B activation and TNF (tumor necrosis factor) secretion. Binds phosphoinositide (PtdIns) via its N-terminal domain. Has NAD(+) hydrolase (NADase) activity, catalyzes cleavage of NAD(+) into ADP-D-ribose (ADPR) and nicotinamide. Also generates a cyclization variant of cyclic ADPR (cADPR), termed v-cADPR (probably 2'cADPR). This chain is Probable 2' cyclic ADP-D-ribose synthase TcpB, found in Brucella melitensis biotype 1 (strain ATCC 23456 / CCUG 17765 / NCTC 10094 / 16M).